The following is a 360-amino-acid chain: DNA replication and repair protein RecF (360 aa).

30-37 (GHNGSGKT) is an ATP binding site.

It belongs to the RecF family.

It is found in the cytoplasm. The RecF protein is involved in DNA metabolism; it is required for DNA replication and normal SOS inducibility. RecF binds preferentially to single-stranded, linear DNA. It also seems to bind ATP. This Shewanella pealeana (strain ATCC 700345 / ANG-SQ1) protein is DNA replication and repair protein RecF.